The sequence spans 478 residues: Monocarboxylate transporter 2 (478 aa).

The Cytoplasmic portion of the chain corresponds to 1–15 (MPPMPSAPPVHPPPD). Residues 16-36 (GGWGWIVVGAAFISIGFSYAF) traverse the membrane as a helical segment. Residues 37–59 (PKAVTVFFKEIQQIFHTTYSEIA) lie on the Extracellular side of the membrane. Residues 60–80 (WISSIMLAVMYAGGPVSSVLV) form a helical membrane-spanning segment. At 81–89 (NKYGSRPVV) the chain is on the cytoplasmic side. Residues 90–110 (IAGGLLCCLGMVLASFSSSVV) traverse the membrane as a helical segment. The Extracellular segment spans residues 111–115 (QLYLT). A helical membrane pass occupies residues 116 to 136 (MGFITGLGLAFNLQPALTIIG). The Cytoplasmic portion of the chain corresponds to 137–148 (KYFYRKRPMANG). A helical membrane pass occupies residues 149–169 (LAMAGSPVFLSSLAPFNQYLF). Topologically, residues 170–173 (NTFG) are extracellular. The helical transmembrane segment at 174–194 (WKGSFLILGSLLLNACVAGSL) threads the bilayer. Residues 195 to 246 (MRPLGPNQTTSKSKNKTGKTEDDSSPKKIKTKKSTWEKVNKYLDFSLFKHRG) are Cytoplasmic-facing. The tract at residues 200–224 (PNQTTSKSKNKTGKTEDDSSPKKIK) is disordered. Residues 247–267 (FLIYLSGNVIMFLGFFAPIIF) traverse the membrane as a helical segment. Residues 268–282 (LAPYAKDQGIDEYSA) lie on the Extracellular side of the membrane. A helical membrane pass occupies residues 283-303 (AFLLSVMAFVDMFARPSVGLI). At 304–312 (ANSKYIRPR) the chain is on the cytoplasmic side. A helical transmembrane segment spans residues 313-333 (IQYFFSFAIMFNGVCHLLCPL). Topologically, residues 334–338 (AQDYT) are extracellular. The helical transmembrane segment at 339–359 (SLVLYAVFFGLGFGSVSSVLF) threads the bilayer. The Cytoplasmic portion of the chain corresponds to 360 to 373 (ETLMDLVGAPRFSS). A helical membrane pass occupies residues 374-394 (AVGLVTIVECGPVLLGPPLAG). Topologically, residues 395-406 (KLVDLTGEYKYM) are extracellular. Residues 407–427 (YMSCGAIVVAASVWLLIGNAI) traverse the membrane as a helical segment. Topologically, residues 428 to 478 (NYRLLAKERKEENARQKTRESEPLSKSKHSEDVNVKVSNAQSVTSERETNI) are cytoplasmic. Residues 437–461 (KEENARQKTRESEPLSKSKHSEDVN) are compositionally biased toward basic and acidic residues. Positions 437 to 478 (KEENARQKTRESEPLSKSKHSEDVNVKVSNAQSVTSERETNI) are disordered.

It belongs to the major facilitator superfamily. Monocarboxylate porter (TC 2.A.1.13) family. Homodimer. Interacts with GRID2IP. Interacts with EMB; interaction mediates SLC16A7 targeting to the plasma membrane. Interacts with isoform 2 of BSG. In terms of tissue distribution, detected in heart and in blood lymphocytes and monocytes (at protein level). High expression in testis, moderate to low in spleen, heart, kidney, pancreas, skeletal muscle, brain and leukocyte. Restricted expression in normal tissues, but widely expressed in cancer cells.

It is found in the cell membrane. The protein localises to the basolateral cell membrane. It localises to the cytoplasm. It catalyses the reaction pyruvate(out) + H(+)(out) = pyruvate(in) + H(+)(in). The catalysed reaction is 3-methyl-2-oxobutanoate(out) + H(+)(out) = 3-methyl-2-oxobutanoate(in) + H(+)(in). The enzyme catalyses (S)-lactate(in) + H(+)(in) = (S)-lactate(out) + H(+)(out). It carries out the reaction acetoacetate(out) + H(+)(out) = acetoacetate(in) + H(+)(in). It catalyses the reaction (R)-3-hydroxybutanoate(out) + H(+)(out) = (R)-3-hydroxybutanoate(in) + H(+)(in). The catalysed reaction is 4-methyl-2-oxopentanoate(out) + H(+)(out) = 4-methyl-2-oxopentanoate(in) + H(+)(in). The enzyme catalyses (S)-3-hydroxybutanoate(out) + H(+)(out) = (S)-3-hydroxybutanoate(in) + H(+)(in). With respect to regulation, transport activity exhibits steep dependence on substrate concentration. Substrate concentration sensitivity of SLC16A7 arises from the strong inter-subunit cooperativity of the SLC16A7 dimer during transport. Inhibited by AR-C155858. Proton-coupled monocarboxylate symporter. Catalyzes the rapid transport across the plasma membrane of monocarboxylates such as L-lactate, pyruvate and ketone bodies, acetoacetate, beta-hydroxybutyrate and acetate. Dimerization is functionally required and both subunits work cooperatively in transporting substrate. The sequence is that of Monocarboxylate transporter 2 from Homo sapiens (Human).